Reading from the N-terminus, the 362-residue chain is MIDAGTDRGDIAITVRDAYKRYGDFVALDHVDFVVPTGSLTALLGPSGSGKSTLLRTIAGLDQPDTGTVTIYGRDVTRVPPQRRGIGFVFQHYAAFKHLTVRDNVAYGLKVRKRPKAEIKAKVDNLLEVVGLSGFQGRYPNQLAGGQRQRMALARALAVDPQVLLLDEPFGALDAKVREDLRAWLRRLHDEVHVTTVLVTHDQAEALDVADRIAVLNQGRIEQIGSPTEVYDAPTNAFVMSFLGAVSTLNGTLVRPHDIRVGRTPEMAVAAEDGTAESTGVARAIVDRVVKLGFEVRVELTSAATGGPFTAQITRGDAEALALREGDTVYVRATRVPPITAGATTVPALSRDGADEATLTSA.

One can recognise an ABC transporter domain in the interval 13–243; the sequence is ITVRDAYKRY…PTNAFVMSFL (231 aa). 45-52 is a binding site for ATP; that stretch reads GPSGSGKS.

This sequence belongs to the ABC transporter superfamily. Sulfate/tungstate importer (TC 3.A.1.6) family. The complex is composed of two ATP-binding proteins (CysA), two transmembrane proteins (CysT and CysW) and a solute-binding protein (CysP).

The protein localises to the cell membrane. The catalysed reaction is sulfate(out) + ATP + H2O = sulfate(in) + ADP + phosphate + H(+). The enzyme catalyses thiosulfate(out) + ATP + H2O = thiosulfate(in) + ADP + phosphate + H(+). Its function is as follows. Part of the ABC transporter complex CysAWTP involved in sulfate/thiosulfate import. Responsible for energy coupling to the transport system. This chain is Sulfate/thiosulfate import ATP-binding protein CysA, found in Mycolicibacterium paratuberculosis (strain ATCC BAA-968 / K-10) (Mycobacterium paratuberculosis).